The sequence spans 245 residues: 14-3-3 protein theta (245 aa).

Met-1 bears the N-acetylmethionine mark. Lys-3 is modified (N6-acetyllysine). Lys-49 is modified (N6-acetyllysine; alternate). Residue Lys-49 forms a Glycyl lysine isopeptide (Lys-Gly) (interchain with G-Cter in SUMO2); alternate linkage. Residue Lys-68 is modified to N6-acetyllysine. The residue at position 82 (Tyr-82) is a 3'-nitrotyrosine. Ser-92 bears the Phosphoserine mark. Position 104 is a 3'-nitrotyrosine (Tyr-104). Lys-115 is subject to N6-acetyllysine. A Phosphoserine; by CK1 modification is found at Ser-232.

The protein belongs to the 14-3-3 family. Homodimer. Interacts with CDK16. Interacts with RGS7 (phosphorylated form). Interacts with SSH1. Interacts with CDKN1B ('Thr-198' phosphorylated form); the interaction translocates CDKN1B to the cytoplasm. Interacts with GAB2. Interacts with the 'Ser-241' phosphorylated form of PDPK1. Interacts with the 'Thr-369' phosphorylated form of DAPK2. Interacts with PI4KB, TBC1D22A and TBC1D22B. Interacts with SLITRK1. Interacts with RIPOR2. Interacts with INAVA; the interaction increases upon PRR (pattern recognition receptor) stimulation and is required for cellular signaling pathway activation and cytokine secretion. Interacts with MARK2, MARK3 and MARK4. Interacts with MEFV.

It localises to the cytoplasm. Its function is as follows. Adapter protein implicated in the regulation of a large spectrum of both general and specialized signaling pathways. Binds to a large number of partners, usually by recognition of a phosphoserine or phosphothreonine motif. Binding generally results in the modulation of the activity of the binding partner. Negatively regulates the kinase activity of PDPK1. The protein is 14-3-3 protein theta (YWHAQ) of Bos taurus (Bovine).